The chain runs to 225 residues: Ribulose-phosphate 3-epimerase (225 aa).

Substrate is bound at residue serine 10. 3 residues coordinate a divalent metal cation: histidine 35, aspartate 37, and histidine 68. Catalysis depends on aspartate 37, which acts as the Proton acceptor. Residues histidine 68, 144–147, and 175–177 contribute to the substrate site; these read GFGG and DGG. A divalent metal cation is bound at residue aspartate 175. Catalysis depends on aspartate 175, which acts as the Proton donor.

The protein belongs to the ribulose-phosphate 3-epimerase family. A divalent metal cation is required as a cofactor.

The catalysed reaction is D-ribulose 5-phosphate = D-xylulose 5-phosphate. It participates in carbohydrate degradation. Catalyzes the reversible epimerization of D-ribulose 5-phosphate to D-xylulose 5-phosphate. This is Ribulose-phosphate 3-epimerase from Rhodospirillum rubrum.